A 176-amino-acid chain; its full sequence is Ribosome maturation factor RimM (176 aa).

Positions 97-176 (EDEFYWRDLI…QILVDWDPDF (80 aa)) constitute a PRC barrel domain.

Belongs to the RimM family. In terms of assembly, binds ribosomal protein uS19.

It localises to the cytoplasm. Functionally, an accessory protein needed during the final step in the assembly of 30S ribosomal subunit, possibly for assembly of the head region. Essential for efficient processing of 16S rRNA. May be needed both before and after RbfA during the maturation of 16S rRNA. It has affinity for free ribosomal 30S subunits but not for 70S ribosomes. The chain is Ribosome maturation factor RimM from Shewanella sp. (strain MR-4).